A 141-amino-acid chain; its full sequence is Large ribosomal subunit protein uL14 (141 aa).

It belongs to the universal ribosomal protein uL14 family. Part of the 50S ribosomal subunit. Forms a cluster with proteins L3 and L24e, part of which may contact the 16S rRNA in 2 intersubunit bridges.

Binds to 23S rRNA. Forms part of two intersubunit bridges in the 70S ribosome. In Pyrococcus horikoshii (strain ATCC 700860 / DSM 12428 / JCM 9974 / NBRC 100139 / OT-3), this protein is Large ribosomal subunit protein uL14.